The chain runs to 917 residues: Translation initiation factor IF-2 (917 aa).

The segment at 1 to 312 is disordered; that stretch reads MEEQKSIKET…KGGREENENT (312 aa). A compositionally biased stretch (basic residues) spans 20–30; that stretch reads TKKKLVIKKKA. Residues 41–59 are compositionally biased toward polar residues; it reads PGAQGQTTATEAKQSSPAS. 2 stretches are compositionally biased toward basic and acidic residues: residues 60–76 and 95–118; these read SDKK…EAKR and RPDR…RKPE. Composition is skewed to gly residues over residues 132-141, 167-256, and 281-293; these read SGGGQGGGNQ, QTGG…GYQG, and APGG…GPGG. Positions 297–312 are enriched in basic and acidic residues; it reads RVFDKEKGGREENENT. In terms of domain architecture, tr-type G spans 414–587; it reads TRPPVVTIMG…ELLDHKANPK (174 aa). A G1 region spans residues 423–430; sequence GHVDHGKT. Residue 423–430 participates in GTP binding; sequence GHVDHGKT. Positions 448-452 are G2; that stretch reads GITQH. Positions 469–472 are G3; sequence DTPG. Residues 469-473 and 523-526 contribute to the GTP site; these read DTPGH and NKID. Residues 523-526 form a G4 region; it reads NKID. The G5 stretch occupies residues 559-561; it reads SAK.

This sequence belongs to the TRAFAC class translation factor GTPase superfamily. Classic translation factor GTPase family. IF-2 subfamily.

It is found in the cytoplasm. Functionally, one of the essential components for the initiation of protein synthesis. Protects formylmethionyl-tRNA from spontaneous hydrolysis and promotes its binding to the 30S ribosomal subunits. Also involved in the hydrolysis of GTP during the formation of the 70S ribosomal complex. In Leptospira biflexa serovar Patoc (strain Patoc 1 / ATCC 23582 / Paris), this protein is Translation initiation factor IF-2.